The primary structure comprises 309 residues: Zinc transporter ZIP2 (309 aa).

Residues 1 to 8 (MEVLLGVK) are Extracellular-facing. A helical transmembrane segment spans residues 9–29 (IGCLLALLVLTLGCGLTPIYV). Residues 30–43 (KWFQMDAATGHHHR) are Cytoplasmic-facing. The chain crosses the membrane as a helical span at residues 44–64 (VLSLLGCTSAGVFLGAGLMHM). Residues 65–103 (TAEALEGIESEIQKFVEQNSTGSKGNSSRDAASSYVEYP) lie on the Extracellular side of the membrane. Residues 104 to 124 (YGELVISLGFFFVFLLESLAL) form a helical membrane-spanning segment. Over 125 to 164 (QCCHGAAGGSTVQEEEWGGTHAFGFHKHPAVPSPSRGPLR) the chain is Cytoplasmic. Residues 165–185 (ALVLLLSLSFHSVFEGLAVGL) traverse the membrane as a helical segment. Residues H175 and E179 each contribute to the Zn(2+) site. The Extracellular segment spans residues 186–191 (QATVAA). The helical transmembrane segment at 192 to 212 (TIQLCVAVLAHKGLVVFSVGL) threads the bilayer. Zn(2+) is bound at residue H202. Topologically, residues 213–225 (RLGKIGTGPRWAT) are cytoplasmic. A helical transmembrane segment spans residues 226–246 (FCILSLALMSPVGLALGLTVA). The Extracellular portion of the chain corresponds to 247–258 (GGASGQTQGLAQ). A helical transmembrane segment spans residues 259–279 (AVLEGIAAGTFLYVTFLEILP). Zn(2+) is bound at residue E276. The Cytoplasmic portion of the chain corresponds to 280–288 (RELACPEAP). Residues 289 to 309 (LAKYSCVAAGFAFMALIALWA) traverse the membrane as a helical segment.

This sequence belongs to the ZIP transporter (TC 2.A.5) family. In terms of tissue distribution, high expression in the liver, skin and ovary.

It localises to the cell membrane. It carries out the reaction Zn(2+)(in) = Zn(2+)(out). The enzyme catalyses Cd(2+)(in) = Cd(2+)(out). Transporter for the divalent cation Zn(2+). Mediates the influx of Zn(2+) into cells from extracellular space. The Zn(2+) uniporter activity is independent of H(+)-driving force, but is modulated by extracellular pH and membrane potential. Transports also other divalent cations Zn(2+), Cd2(+), Cu2(+), Co2(+) in the order of decreasing affinity, respectively. In the skin, aids in the differentiation of keratinocytes in the epidermis. The sequence is that of Zinc transporter ZIP2 (Slc39a2) from Mus musculus (Mouse).